Reading from the N-terminus, the 148-residue chain is Large ribosomal subunit protein uL15 (148 aa).

The segment at 1-47 is disordered; that stretch reads MAFSLENLRPAPGSRPKSKRVGRGSSSGKGKTSSRGHKGQGRGTGKV.

The protein belongs to the universal ribosomal protein uL15 family. In terms of assembly, part of the 50S ribosomal subunit.

Functionally, binds to the 23S rRNA. The chain is Large ribosomal subunit protein uL15 from Kosmotoga olearia (strain ATCC BAA-1733 / DSM 21960 / TBF 19.5.1).